Here is a 212-residue protein sequence, read N- to C-terminus: uncharacterized protein (212 aa).

A helical transmembrane segment spans residues Ile-5–Ala-25.

The protein resides in the membrane. This is an uncharacterized protein from Borreliella burgdorferi (strain ATCC 35210 / DSM 4680 / CIP 102532 / B31) (Borrelia burgdorferi).